The following is a 468-amino-acid chain: tRNA modification GTPase MnmE (468 aa).

Positions 29, 97, and 136 each coordinate (6S)-5-formyl-5,6,7,8-tetrahydrofolate. The TrmE-type G domain maps to glycine 232–glutamate 390. Residue asparagine 242 coordinates K(+). Residues asparagine 242–serine 247, threonine 261–threonine 267, and aspartate 286–glycine 289 each bind GTP. Mg(2+) is bound at residue serine 246. The K(+) site is built by threonine 261, leucine 263, and threonine 266. Threonine 267 lines the Mg(2+) pocket. Lysine 468 is a binding site for (6S)-5-formyl-5,6,7,8-tetrahydrofolate.

It belongs to the TRAFAC class TrmE-Era-EngA-EngB-Septin-like GTPase superfamily. TrmE GTPase family. As to quaternary structure, homodimer. Heterotetramer of two MnmE and two MnmG subunits. The cofactor is K(+).

Its subcellular location is the cytoplasm. Functionally, exhibits a very high intrinsic GTPase hydrolysis rate. Involved in the addition of a carboxymethylaminomethyl (cmnm) group at the wobble position (U34) of certain tRNAs, forming tRNA-cmnm(5)s(2)U34. The protein is tRNA modification GTPase MnmE of Magnetococcus marinus (strain ATCC BAA-1437 / JCM 17883 / MC-1).